Here is a 126-residue protein sequence, read N- to C-terminus: Large ribosomal subunit protein bL12 (126 aa).

The protein belongs to the bacterial ribosomal protein bL12 family. Homodimer. Part of the ribosomal stalk of the 50S ribosomal subunit. Forms a multimeric L10(L12)X complex, where L10 forms an elongated spine to which 2 to 4 L12 dimers bind in a sequential fashion. Binds GTP-bound translation factors.

Functionally, forms part of the ribosomal stalk which helps the ribosome interact with GTP-bound translation factors. Is thus essential for accurate translation. The chain is Large ribosomal subunit protein bL12 from Chlorobaculum tepidum (strain ATCC 49652 / DSM 12025 / NBRC 103806 / TLS) (Chlorobium tepidum).